The primary structure comprises 230 residues: Cytochrome c oxidase subunit 2 (230 aa).

The Mitochondrial intermembrane segment spans residues 1–14 (MAHPSQLGFQDAAS). A helical membrane pass occupies residues 15–45 (PVMEELIHFHDHTLMIVFLISTLVLYIITAM). The Mitochondrial matrix segment spans residues 46–59 (VSTKLTNKYILDSQ). Residues 60-87 (EIEIVWTILPAIILIMIALPSLRILYLM) form a helical membrane-spanning segment. Topologically, residues 88 to 230 (DEINDPHLTI…TWSSLMLEEA (143 aa)) are mitochondrial intermembrane. Cu cation is bound by residues histidine 161, cysteine 196, glutamate 198, cysteine 200, histidine 204, and methionine 207. Glutamate 198 is a Mg(2+) binding site.

Belongs to the cytochrome c oxidase subunit 2 family. Component of the cytochrome c oxidase (complex IV, CIV), a multisubunit enzyme composed of 14 subunits. The complex is composed of a catalytic core of 3 subunits MT-CO1, MT-CO2 and MT-CO3, encoded in the mitochondrial DNA, and 11 supernumerary subunits COX4I, COX5A, COX5B, COX6A, COX6B, COX6C, COX7A, COX7B, COX7C, COX8 and NDUFA4, which are encoded in the nuclear genome. The complex exists as a monomer or a dimer and forms supercomplexes (SCs) in the inner mitochondrial membrane with NADH-ubiquinone oxidoreductase (complex I, CI) and ubiquinol-cytochrome c oxidoreductase (cytochrome b-c1 complex, complex III, CIII), resulting in different assemblies (supercomplex SCI(1)III(2)IV(1) and megacomplex MCI(2)III(2)IV(2)). Found in a complex with TMEM177, COA6, COX18, COX20, SCO1 and SCO2. Interacts with TMEM177 in a COX20-dependent manner. Interacts with COX20. Interacts with COX16. Cu cation serves as cofactor.

It localises to the mitochondrion inner membrane. The catalysed reaction is 4 Fe(II)-[cytochrome c] + O2 + 8 H(+)(in) = 4 Fe(III)-[cytochrome c] + 2 H2O + 4 H(+)(out). Its function is as follows. Component of the cytochrome c oxidase, the last enzyme in the mitochondrial electron transport chain which drives oxidative phosphorylation. The respiratory chain contains 3 multisubunit complexes succinate dehydrogenase (complex II, CII), ubiquinol-cytochrome c oxidoreductase (cytochrome b-c1 complex, complex III, CIII) and cytochrome c oxidase (complex IV, CIV), that cooperate to transfer electrons derived from NADH and succinate to molecular oxygen, creating an electrochemical gradient over the inner membrane that drives transmembrane transport and the ATP synthase. Cytochrome c oxidase is the component of the respiratory chain that catalyzes the reduction of oxygen to water. Electrons originating from reduced cytochrome c in the intermembrane space (IMS) are transferred via the dinuclear copper A center (CU(A)) of subunit 2 and heme A of subunit 1 to the active site in subunit 1, a binuclear center (BNC) formed by heme A3 and copper B (CU(B)). The BNC reduces molecular oxygen to 2 water molecules using 4 electrons from cytochrome c in the IMS and 4 protons from the mitochondrial matrix. The sequence is that of Cytochrome c oxidase subunit 2 (MT-CO2) from Scyliorhinus canicula (Small-spotted catshark).